The chain runs to 362 residues: MAQVFNFSSGPAMLPAEVLKLAQQDLRDWHGLGTSVMEISHRGKEFIQVAEEAEQDFRDLLSIPSNYKVLFCHGGGRGQFAAIPLNILGDKTSADYVDAGYWAASAIKEAKKYCSPNVIDAKVTVDGLRAVKPMSEWQLSDNAAYVHYCPNETIDGIAIDETPNFGSDVVVAADFSSTILSAPLDVSRYGVIYAGAQKNIGPAGLTIVIVREDLLGKANIACPSILDYTVLNDNDSMFNTPPTFAWYLSGLVFKWLKAQGGVAAMNKINQQKAELLYGVIDNSDFYRNDVAKSNRSRMNVPFQLADSALDKVFLEESFAAGLHALKGHRVVGGMRASIYNAMPLEGVKALTDFMVDFERRHG.

L-glutamate-binding residues include S9 and R42. Pyridoxal 5'-phosphate is bound by residues 76 to 77, W102, T153, D174, and Q197; that span reads GR. N6-(pyridoxal phosphate)lysine is present on K198. 239 to 240 contacts pyridoxal 5'-phosphate; that stretch reads NT.

Belongs to the class-V pyridoxal-phosphate-dependent aminotransferase family. SerC subfamily. As to quaternary structure, homodimer. Pyridoxal 5'-phosphate is required as a cofactor.

The protein localises to the cytoplasm. It catalyses the reaction O-phospho-L-serine + 2-oxoglutarate = 3-phosphooxypyruvate + L-glutamate. The catalysed reaction is 4-(phosphooxy)-L-threonine + 2-oxoglutarate = (R)-3-hydroxy-2-oxo-4-phosphooxybutanoate + L-glutamate. Its pathway is amino-acid biosynthesis; L-serine biosynthesis; L-serine from 3-phospho-D-glycerate: step 2/3. It functions in the pathway cofactor biosynthesis; pyridoxine 5'-phosphate biosynthesis; pyridoxine 5'-phosphate from D-erythrose 4-phosphate: step 3/5. Functionally, catalyzes the reversible conversion of 3-phosphohydroxypyruvate to phosphoserine and of 3-hydroxy-2-oxo-4-phosphonooxybutanoate to phosphohydroxythreonine. This Citrobacter koseri (strain ATCC BAA-895 / CDC 4225-83 / SGSC4696) protein is Phosphoserine aminotransferase.